Here is a 154-residue protein sequence, read N- to C-terminus: 3-dehydroquinate dehydratase (154 aa).

Catalysis depends on Tyr-23, which acts as the Proton acceptor. Substrate contacts are provided by Asn-74, His-80, and Asp-87. His-100 serves as the catalytic Proton donor. Substrate-binding positions include 101–102 (LS) and Arg-111.

This sequence belongs to the type-II 3-dehydroquinase family. In terms of assembly, homododecamer.

The catalysed reaction is 3-dehydroquinate = 3-dehydroshikimate + H2O. It functions in the pathway metabolic intermediate biosynthesis; chorismate biosynthesis; chorismate from D-erythrose 4-phosphate and phosphoenolpyruvate: step 3/7. Catalyzes a trans-dehydration via an enolate intermediate. This is 3-dehydroquinate dehydratase from Actinobacillus pleuropneumoniae serotype 5b (strain L20).